The chain runs to 605 residues: Isocitrate dehydrogenase kinase/phosphatase (605 aa).

Residues 327 to 333 and Lys-348 each bind ATP; that span reads APGIKGL. Asp-383 is a catalytic residue.

This sequence belongs to the AceK family.

It is found in the cytoplasm. The catalysed reaction is L-seryl-[isocitrate dehydrogenase] + ATP = O-phospho-L-seryl-[isocitrate dehydrogenase] + ADP + H(+). Bifunctional enzyme which can phosphorylate or dephosphorylate isocitrate dehydrogenase (IDH) on a specific serine residue. This is a regulatory mechanism which enables bacteria to bypass the Krebs cycle via the glyoxylate shunt in response to the source of carbon. When bacteria are grown on glucose, IDH is fully active and unphosphorylated, but when grown on acetate or ethanol, the activity of IDH declines drastically concomitant with its phosphorylation. This is Isocitrate dehydrogenase kinase/phosphatase from Burkholderia multivorans (strain ATCC 17616 / 249).